Consider the following 409-residue polypeptide: Elongation factor Tu (409 aa).

A tr-type G domain is found at 10 to 214; it reads KPHVNIGTIG…AVDSYIPDPE (205 aa). Residues 19 to 26 form a G1 region; that stretch reads GHVDHGKT. 19–26 is a GTP binding site; the sequence is GHVDHGKT. Thr26 provides a ligand contact to Mg(2+). The interval 60–64 is G2; that stretch reads GITIN. A G3 region spans residues 81-84; it reads DCPG. GTP is bound by residues 81 to 85 and 136 to 139; these read DCPGH and NKED. The interval 136-139 is G4; the sequence is NKED. The interval 174–176 is G5; the sequence is SGL.

Monomer.

Its subcellular location is the cytoplasm. The enzyme catalyses GTP + H2O = GDP + phosphate + H(+). Its function is as follows. GTP hydrolase that promotes the GTP-dependent binding of aminoacyl-tRNA to the A-site of ribosomes during protein biosynthesis. In Nostoc sp. (strain PCC 7120 / SAG 25.82 / UTEX 2576), this protein is Elongation factor Tu.